A 393-amino-acid polypeptide reads, in one-letter code: Stearoyl-[acyl-carrier-protein] 9-desaturase, chloroplastic (393 aa).

The N-terminal 31 residues, 1–31, are a transit peptide targeting the chloroplast; that stretch reads MASMVAFRPEAFLCFSPPKTTRSTRSPRISM. Residues Glu-135, Glu-173, His-176, Glu-226, Glu-259, and His-262 each coordinate Fe cation.

It belongs to the fatty acid desaturase type 2 family. In terms of assembly, homodimer. The cofactor is Fe(2+).

It localises to the plastid. The protein localises to the chloroplast. The catalysed reaction is octadecanoyl-[ACP] + 2 reduced [2Fe-2S]-[ferredoxin] + O2 + 2 H(+) = (9Z)-octadecenoyl-[ACP] + 2 oxidized [2Fe-2S]-[ferredoxin] + 2 H2O. It participates in lipid metabolism; fatty acid metabolism. In terms of biological role, converts stearoyl-ACP to oleoyl-ACP by introduction of a cis double bond between carbons 9 and 10 of the acyl chain. The protein is Stearoyl-[acyl-carrier-protein] 9-desaturase, chloroplastic of Elaeis guineensis var. tenera (Oil palm).